Here is a 606-residue protein sequence, read N- to C-terminus: Probable potassium transport system protein Kup (606 aa).

The next 12 helical transmembrane spans lie at 18 to 38 (GLVFGDIGTSPIYTLTVVFAL), 46 to 66 (VFGILSLVFWTMTILVTAEYA), 97 to 117 (LTFVVFLTYLGVSLLMGDGVI), 138 to 158 (GLHQSWLILIAAIIAVGLFVF), 166 to 186 (VAGAFGPIMVVWFASLALSGA), 212 to 232 (GLAGFIVLSEVILCATGGEAL), 247 to 267 (AWYIVFWALYLNYLGQGAFII), 287 to 307 (LYIPFLILTILATIIASQAMI), 339 to 359 (IYIGSVNWMLMIAVVVIMLVF), 368 to 388 (AYGLAVTGSMSITGIMMILIL), 395 to 415 (WKAVFAALITVVDLVFFTACL), and 418 to 438 (LPHGGYWSIILASVPFITILV).

It belongs to the HAK/KUP transporter (TC 2.A.72) family.

Its subcellular location is the cell inner membrane. It carries out the reaction K(+)(in) + H(+)(in) = K(+)(out) + H(+)(out). Functionally, transport of potassium into the cell. Likely operates as a K(+):H(+) symporter. The chain is Probable potassium transport system protein Kup from Trichlorobacter lovleyi (strain ATCC BAA-1151 / DSM 17278 / SZ) (Geobacter lovleyi).